The chain runs to 211 residues: ATP phosphoribosyltransferase (211 aa).

It belongs to the ATP phosphoribosyltransferase family. Short subfamily. In terms of assembly, heteromultimer composed of HisG and HisZ subunits.

It is found in the cytoplasm. The catalysed reaction is 1-(5-phospho-beta-D-ribosyl)-ATP + diphosphate = 5-phospho-alpha-D-ribose 1-diphosphate + ATP. It participates in amino-acid biosynthesis; L-histidine biosynthesis; L-histidine from 5-phospho-alpha-D-ribose 1-diphosphate: step 1/9. In terms of biological role, catalyzes the condensation of ATP and 5-phosphoribose 1-diphosphate to form N'-(5'-phosphoribosyl)-ATP (PR-ATP). Has a crucial role in the pathway because the rate of histidine biosynthesis seems to be controlled primarily by regulation of HisG enzymatic activity. This is ATP phosphoribosyltransferase from Bacillus cereus (strain ATCC 10987 / NRS 248).